The chain runs to 274 residues: MASLNSALRTAQHVRTATRGALLWGYEQKLAREVKANGKLPRHLGLILDGNRRFARAAGLQREMGHSFGADKAHEVLQWCLELGIPSATIWVLSTDNGSREPAELAHILSLLEREARQLAVDPRIHANRVRVRAIGQHDNFPPQVLAALNNLEESTAGYEGMRLNIAVGYGGREEIVDAVQSYLRTQAAQGATLEQAAENLTPDAIGAHLYAADQPDPDFIIRTSGEIRLSGFMLWQSVYSEYYFCDVYWPGFRRVDFLRALRDFQGRDRRFGK.

Residue Asp49 is part of the active site. Asp49 contacts Mg(2+). Substrate contacts are provided by residues 50-53 (GNRR), Phe54, Arg62, His66, and 94-96 (STD). The Proton acceptor role is filled by Asn97. Residues Arg100, Arg223, and 229–231 (RLS) each bind substrate. Glu242 contributes to the Mg(2+) binding site.

It belongs to the UPP synthase family. In terms of assembly, homodimer. Requires Mg(2+) as cofactor.

Its function is as follows. Catalyzes the condensation of isopentenyl diphosphate (IPP) with allylic pyrophosphates generating different type of terpenoids. In Deinococcus radiodurans (strain ATCC 13939 / DSM 20539 / JCM 16871 / CCUG 27074 / LMG 4051 / NBRC 15346 / NCIMB 9279 / VKM B-1422 / R1), this protein is Isoprenyl transferase.